The following is a 215-amino-acid chain: ATP phosphoribosyltransferase (215 aa).

This sequence belongs to the ATP phosphoribosyltransferase family. Short subfamily. In terms of assembly, heteromultimer composed of HisG and HisZ subunits.

The protein resides in the cytoplasm. It carries out the reaction 1-(5-phospho-beta-D-ribosyl)-ATP + diphosphate = 5-phospho-alpha-D-ribose 1-diphosphate + ATP. Its pathway is amino-acid biosynthesis; L-histidine biosynthesis; L-histidine from 5-phospho-alpha-D-ribose 1-diphosphate: step 1/9. In terms of biological role, catalyzes the condensation of ATP and 5-phosphoribose 1-diphosphate to form N'-(5'-phosphoribosyl)-ATP (PR-ATP). Has a crucial role in the pathway because the rate of histidine biosynthesis seems to be controlled primarily by regulation of HisG enzymatic activity. This is ATP phosphoribosyltransferase from Acidithiobacillus ferrooxidans (strain ATCC 23270 / DSM 14882 / CIP 104768 / NCIMB 8455) (Ferrobacillus ferrooxidans (strain ATCC 23270)).